The primary structure comprises 476 residues: Sulfate adenylyltransferase subunit 1 (476 aa).

The tr-type G domain maps to 24 to 228; it reads KSLLRFLTCG…MAWYQGPTLL (205 aa). The tract at residues 33–40 is G1; the sequence is GSVDDGKS. 33 to 40 lines the GTP pocket; sequence GSVDDGKS. The tract at residues 91-95 is G2; it reads GITID. The interval 112–115 is G3; the sequence is DTPG. GTP-binding positions include 112–116 and 167–170; these read DTPGH and NKMD. The interval 167–170 is G4; the sequence is NKMD. The segment at 205 to 207 is G5; sequence SAL.

This sequence belongs to the TRAFAC class translation factor GTPase superfamily. Classic translation factor GTPase family. CysN/NodQ subfamily. In terms of assembly, heterodimer composed of CysD, the smaller subunit, and CysN.

The catalysed reaction is sulfate + ATP + H(+) = adenosine 5'-phosphosulfate + diphosphate. It participates in sulfur metabolism; hydrogen sulfide biosynthesis; sulfite from sulfate: step 1/3. Functionally, with CysD forms the ATP sulfurylase (ATPS) that catalyzes the adenylation of sulfate producing adenosine 5'-phosphosulfate (APS) and diphosphate, the first enzymatic step in sulfur assimilation pathway. APS synthesis involves the formation of a high-energy phosphoric-sulfuric acid anhydride bond driven by GTP hydrolysis by CysN coupled to ATP hydrolysis by CysD. This Vibrio vulnificus (strain CMCP6) protein is Sulfate adenylyltransferase subunit 1.